Reading from the N-terminus, the 240-residue chain is Phosphatidylserine decarboxylase proenzyme (240 aa).

Serine 198 (schiff-base intermediate with substrate; via pyruvic acid) is an active-site residue. Residue serine 198 is modified to Pyruvic acid (Ser); by autocatalysis.

The protein belongs to the phosphatidylserine decarboxylase family. PSD-A subfamily. Heterodimer of a large membrane-associated beta subunit and a small pyruvoyl-containing alpha subunit. Requires pyruvate as cofactor. In terms of processing, is synthesized initially as an inactive proenzyme. Formation of the active enzyme involves a self-maturation process in which the active site pyruvoyl group is generated from an internal serine residue via an autocatalytic post-translational modification. Two non-identical subunits are generated from the proenzyme in this reaction, and the pyruvate is formed at the N-terminus of the alpha chain, which is derived from the carboxyl end of the proenzyme. The post-translation cleavage follows an unusual pathway, termed non-hydrolytic serinolysis, in which the side chain hydroxyl group of the serine supplies its oxygen atom to form the C-terminus of the beta chain, while the remainder of the serine residue undergoes an oxidative deamination to produce ammonia and the pyruvoyl prosthetic group on the alpha chain.

The protein resides in the cell membrane. The enzyme catalyses a 1,2-diacyl-sn-glycero-3-phospho-L-serine + H(+) = a 1,2-diacyl-sn-glycero-3-phosphoethanolamine + CO2. It participates in phospholipid metabolism; phosphatidylethanolamine biosynthesis; phosphatidylethanolamine from CDP-diacylglycerol: step 2/2. In terms of biological role, catalyzes the formation of phosphatidylethanolamine (PtdEtn) from phosphatidylserine (PtdSer). This chain is Phosphatidylserine decarboxylase proenzyme, found in Paramagnetospirillum magneticum (strain ATCC 700264 / AMB-1) (Magnetospirillum magneticum).